The following is a 476-amino-acid chain: Glycogen synthase (476 aa).

K15 contacts ADP-alpha-D-glucose.

It belongs to the glycosyltransferase 1 family. Bacterial/plant glycogen synthase subfamily.

It catalyses the reaction [(1-&gt;4)-alpha-D-glucosyl](n) + ADP-alpha-D-glucose = [(1-&gt;4)-alpha-D-glucosyl](n+1) + ADP + H(+). The protein operates within glycan biosynthesis; glycogen biosynthesis. In terms of biological role, synthesizes alpha-1,4-glucan chains using ADP-glucose. The chain is Glycogen synthase from Streptococcus sanguinis (strain SK36).